Here is a 482-residue protein sequence, read N- to C-terminus: Glutamyl-tRNA(Gln) amidotransferase subunit A (482 aa).

Active-site charge relay system residues include K75 and S150. The active-site Acyl-ester intermediate is S174.

The protein belongs to the amidase family. GatA subfamily. In terms of assembly, heterotrimer of A, B and C subunits.

It catalyses the reaction L-glutamyl-tRNA(Gln) + L-glutamine + ATP + H2O = L-glutaminyl-tRNA(Gln) + L-glutamate + ADP + phosphate + H(+). In terms of biological role, allows the formation of correctly charged Gln-tRNA(Gln) through the transamidation of misacylated Glu-tRNA(Gln) in organisms which lack glutaminyl-tRNA synthetase. The reaction takes place in the presence of glutamine and ATP through an activated gamma-phospho-Glu-tRNA(Gln). This chain is Glutamyl-tRNA(Gln) amidotransferase subunit A, found in Deinococcus radiodurans (strain ATCC 13939 / DSM 20539 / JCM 16871 / CCUG 27074 / LMG 4051 / NBRC 15346 / NCIMB 9279 / VKM B-1422 / R1).